The following is a 124-amino-acid chain: Iron-sulfur cluster insertion protein ErpA (124 aa).

Iron-sulfur cluster is bound by residues cysteine 52, cysteine 116, and cysteine 118.

This sequence belongs to the HesB/IscA family. In terms of assembly, homodimer. Requires iron-sulfur cluster as cofactor.

Required for insertion of 4Fe-4S clusters for at least IspG. In Acidithiobacillus ferrooxidans (strain ATCC 23270 / DSM 14882 / CIP 104768 / NCIMB 8455) (Ferrobacillus ferrooxidans (strain ATCC 23270)), this protein is Iron-sulfur cluster insertion protein ErpA.